A 202-amino-acid polypeptide reads, in one-letter code: Shikimate kinase (202 aa).

Position 20–25 (20–25 (GSGKST)) interacts with ATP. Mg(2+) is bound at residue Ser24. Residues Asp42, Arg66, and Gly88 each coordinate substrate. Residue Arg126 coordinates ATP. Substrate is bound at residue Arg153.

It belongs to the shikimate kinase family. Monomer. Mg(2+) serves as cofactor.

It is found in the cytoplasm. The enzyme catalyses shikimate + ATP = 3-phosphoshikimate + ADP + H(+). The protein operates within metabolic intermediate biosynthesis; chorismate biosynthesis; chorismate from D-erythrose 4-phosphate and phosphoenolpyruvate: step 5/7. In terms of biological role, catalyzes the specific phosphorylation of the 3-hydroxyl group of shikimic acid using ATP as a cosubstrate. This is Shikimate kinase from Chlorobium luteolum (strain DSM 273 / BCRC 81028 / 2530) (Pelodictyon luteolum).